A 478-amino-acid chain; its full sequence is Lipoprotein lipase (478 aa).

The signal sequence occupies residues 1-27 (MESKVLLLLALSVWLQSLTVSRGGLVA). Residues 35–56 (KDFRDIESKFALRTPEDTAEDT) form an interaction with GPIHBP1 region. Cys-57 and Cys-70 are joined by a disulfide. An N-linked (GlcNAc...) asparagine glycan is attached at Asn-73. Tyr-124 is modified (3'-nitrotyrosine). Ser-162 functions as the Nucleophile in the catalytic mechanism. The active-site Charge relay system is Asp-186. Tyr-194 is subject to 3'-nitrotyrosine. Residues Ala-197, Arg-200, Ser-202, and Asp-205 each coordinate Ca(2+). Cys-246 and Cys-269 are disulfide-bonded. Residues 246–269 (CNIGEALRVIAERGLGDVDQLVKC) are essential for determining substrate specificity. The active-site Charge relay system is His-271. 2 cysteine pairs are disulfide-bonded: Cys-294-Cys-313 and Cys-305-Cys-308. In terms of domain architecture, PLAT spans 344–467 (FHYQVKIHFS…KGKSPVIFVK (124 aa)). Tyr-346 carries the 3'-nitrotyrosine modification. N-linked (GlcNAc...) asparagine glycosylation is present at Asn-389. Residues 420 to 424 (WSNWW) are important for interaction with lipoprotein particles. Positions 433 to 437 (KIRVK) are important for heparin binding. Residues 446–470 (IFCSREKMSYLQKGKSPVIFVKCHD) form an interaction with GPIHBP1 region. A disulfide bridge links Cys-448 with Cys-468.

The protein belongs to the AB hydrolase superfamily. Lipase family. In terms of assembly, homodimer. Interacts with GPIHBP1 with 1:1 stoichiometry. Interacts with APOC2; the interaction activates LPL activity in the presence of lipids. Interaction with heparan sulfate proteoglycans is required to protect LPL against loss of activity. Associates with lipoprotein particles in blood plasma. Interacts with LMF1 and SEL1L; interaction with SEL1L is required to prevent aggregation of newly synthesized LPL in the endoplasmic reticulum (ER), and for normal export of LPL from the ER to the extracellular space. Interacts with SORL1; SORL1 acts as a sorting receptor, promoting LPL localization to endosomes and later to lysosomes, leading to degradation of newly synthesized LPL. Post-translationally, tyrosine nitration after lipopolysaccharide (LPS) challenge down-regulates the lipase activity.

The protein localises to the cell membrane. Its subcellular location is the secreted. The protein resides in the extracellular space. It localises to the extracellular matrix. The catalysed reaction is a triacylglycerol + H2O = a diacylglycerol + a fatty acid + H(+). The enzyme catalyses a 1,2-diacyl-sn-glycero-3-phosphocholine + H2O = a 2-acyl-sn-glycero-3-phosphocholine + a fatty acid + H(+). It carries out the reaction 1,2,3-tri-(9Z-octadecenoyl)-glycerol + H2O = di-(9Z)-octadecenoylglycerol + (9Z)-octadecenoate + H(+). It catalyses the reaction 1,2-di-(9Z-octadecenoyl)-sn-glycero-3-phosphocholine + H2O = (9Z-octadecenoyl)-sn-glycero-3-phosphocholine + (9Z)-octadecenoate + H(+). The catalysed reaction is 1,2,3-tributanoylglycerol + H2O = dibutanoylglycerol + butanoate + H(+). The enzyme catalyses 1,2-dihexadecanoyl-sn-glycero-3-phosphocholine + H2O = hexadecanoyl-sn-glycero-3-phosphocholine + hexadecanoate + H(+). The apolipoprotein APOC2 acts as a coactivator of LPL activity. Ca(2+) binding promotes protein stability and formation of the active homodimer. Interaction with GPIHBP1 protects LPL against inactivation by ANGPTL4. Its function is as follows. Key enzyme in triglyceride metabolism. Catalyzes the hydrolysis of triglycerides from circulating chylomicrons and very low density lipoproteins (VLDL), and thereby plays an important role in lipid clearance from the blood stream, lipid utilization and storage. Although it has both phospholipase and triglyceride lipase activities it is primarily a triglyceride lipase with low but detectable phospholipase activity. Mediates margination of triglyceride-rich lipoprotein particles in capillaries. Recruited to its site of action on the luminal surface of vascular endothelium by binding to GPIHBP1 and cell surface heparan sulfate proteoglycans. This is Lipoprotein lipase (LPL) from Ovis aries (Sheep).